Consider the following 1047-residue polypeptide: tRNA wybutosine-synthesizing protein 4 (1047 aa).

Residues arginine 69, glycine 95, aspartate 122, 169 to 170 (DL), and glutamate 196 contribute to the S-adenosyl-L-methionine site. Positions 814-1003 (GRQYLRSISA…AAGRDVYGNR (190 aa)) constitute a JmjC domain.

This sequence belongs to the methyltransferase superfamily. LCMT family.

The enzyme catalyses 7-[(3S)-3-amino-3-carboxypropyl]wyosine(37) in tRNA(Phe) + S-adenosyl-L-methionine = 7-[(3S)-(3-amino-3-methoxycarbonyl)propyl]wyosine(37) in tRNA(Phe) + S-adenosyl-L-homocysteine. It catalyses the reaction 7-[(3S)-(3-amino-3-methoxycarbonyl)propyl]wyosine(37) in tRNA(Phe) + S-adenosyl-L-methionine + CO2 = wybutosine(37) in tRNA(Phe) + S-adenosyl-L-homocysteine + 2 H(+). It functions in the pathway tRNA modification; wybutosine-tRNA(Phe) biosynthesis. Probable S-adenosyl-L-methionine-dependent methyltransferase that acts as a component of the wybutosine biosynthesis pathway. Wybutosine is a hyper modified guanosine with a tricyclic base found at the 3'-position adjacent to the anticodon of eukaryotic phenylalanine tRNA. May methylate the carboxyl group of leucine residues to form alpha-leucine ester residues. The protein is tRNA wybutosine-synthesizing protein 4 (ppm2) of Aspergillus fumigatus (strain ATCC MYA-4609 / CBS 101355 / FGSC A1100 / Af293) (Neosartorya fumigata).